Consider the following 201-residue polypeptide: Cytochrome c oxidase subunit 3 (201 aa).

A run of 4 helical transmembrane segments spans residues 25–45 (VLGL…LFAA), 65–85 (LFVP…IHYG), 100–120 (WYWI…YEYL), and 137–157 (VMTG…LGVI).

The protein belongs to the cytochrome c oxidase subunit 3 family.

The protein resides in the cell membrane. It carries out the reaction 4 Fe(II)-[cytochrome c] + O2 + 8 H(+)(in) = 4 Fe(III)-[cytochrome c] + 2 H2O + 4 H(+)(out). The sequence is that of Cytochrome c oxidase subunit 3 (ctaE) from Thermostichus vulcanus (Synechococcus vulcanus).